The sequence spans 328 residues: Phosphate acyltransferase (328 aa).

This sequence belongs to the PlsX family. As to quaternary structure, homodimer. Probably interacts with PlsY.

It localises to the cytoplasm. It carries out the reaction a fatty acyl-[ACP] + phosphate = an acyl phosphate + holo-[ACP]. It participates in lipid metabolism; phospholipid metabolism. In terms of biological role, catalyzes the reversible formation of acyl-phosphate (acyl-PO(4)) from acyl-[acyl-carrier-protein] (acyl-ACP). This enzyme utilizes acyl-ACP as fatty acyl donor, but not acyl-CoA. The sequence is that of Phosphate acyltransferase from Staphylococcus aureus (strain bovine RF122 / ET3-1).